Reading from the N-terminus, the 222-residue chain is Putative germin-like protein 3-2 (222 aa).

An N-terminal signal peptide occupies residues 1–22 (MAKLILATFAVVFLALAATSLA). Residues cysteine 32 and cysteine 50 are joined by a disulfide bond. N-linked (GlcNAc...) asparagine glycans are attached at residues asparagine 55 and asparagine 71. The Cupin type-1 domain maps to 64–212 (DGLTNAGNTT…AFQVDGGMVE (149 aa)). Mn(2+) contacts are provided by histidine 112, histidine 114, glutamate 119, and histidine 158. A glycan (N-linked (GlcNAc...) asparagine) is linked at asparagine 165.

This sequence belongs to the germin family. Oligomer (believed to be a pentamer but probably hexamer).

Its subcellular location is the secreted. The protein resides in the extracellular space. It is found in the apoplast. Functionally, may play a role in plant defense. Probably has no oxalate oxidase activity even if the active site is conserved. The polypeptide is Putative germin-like protein 3-2 (Oryza sativa subsp. japonica (Rice)).